We begin with the raw amino-acid sequence, 435 residues long: AP-2 complex subunit mu (435 aa).

Residues 170-434 (RNELFLDVLE…IGRSGIYETR (265 aa)) enclose the MHD domain. The a 1,2-diacyl-sn-glycero-3-phospho-(1D-myo-inositol-3,4,5-trisphosphate) site is built by Lys-341, Lys-345, and Lys-354.

It belongs to the adaptor complexes medium subunit family. In terms of assembly, adaptor protein complex 2 (AP-2) is a heterotetramer composed of two large adaptins (alpha-type subunit and beta-type subunit), a medium adaptin (mu-type subunit) and a small adaptin (sigma-type subunit).

The protein localises to the cell membrane. It localises to the membrane. The protein resides in the coated pit. Its function is as follows. Component of the adaptor complexes which link clathrin to receptors in coated vesicles. Clathrin-associated protein complexes are believed to interact with the cytoplasmic tails of membrane proteins, leading to their selection and concentration. AP50 is a subunit of the plasma membrane adaptor. The complex binds polyphosphoinositide-containing lipids. The protein is AP-2 complex subunit mu (ap2m1) of Xenopus laevis (African clawed frog).